The chain runs to 257 residues: Imidazole glycerol phosphate synthase subunit HisF (257 aa).

Active-site residues include D11 and D130.

Belongs to the HisA/HisF family. Heterodimer of HisH and HisF.

The protein localises to the cytoplasm. It catalyses the reaction 5-[(5-phospho-1-deoxy-D-ribulos-1-ylimino)methylamino]-1-(5-phospho-beta-D-ribosyl)imidazole-4-carboxamide + L-glutamine = D-erythro-1-(imidazol-4-yl)glycerol 3-phosphate + 5-amino-1-(5-phospho-beta-D-ribosyl)imidazole-4-carboxamide + L-glutamate + H(+). It functions in the pathway amino-acid biosynthesis; L-histidine biosynthesis; L-histidine from 5-phospho-alpha-D-ribose 1-diphosphate: step 5/9. In terms of biological role, IGPS catalyzes the conversion of PRFAR and glutamine to IGP, AICAR and glutamate. The HisF subunit catalyzes the cyclization activity that produces IGP and AICAR from PRFAR using the ammonia provided by the HisH subunit. The polypeptide is Imidazole glycerol phosphate synthase subunit HisF (Mannheimia succiniciproducens (strain KCTC 0769BP / MBEL55E)).